The primary structure comprises 904 residues: HTH-type transcriptional regulator MalT (904 aa).

39 to 46 lines the ATP pocket; sequence CPAGYGKT. The 66-residue stretch at 832-897 folds into the HTH luxR-type domain; sequence ELIRTSPLTQ…EAVQQAQQLL (66 aa). Residues 856–875 constitute a DNA-binding region (H-T-H motif); it reads NDQIAGELAVAATTIKTHIR.

This sequence belongs to the MalT family. In terms of assembly, monomer in solution. Oligomerizes to an active state in the presence of the positive effectors ATP and maltotriose.

Activated by ATP and maltotriose, which are both required for DNA binding. Positively regulates the transcription of the maltose regulon whose gene products are responsible for uptake and catabolism of malto-oligosaccharides. Specifically binds to the promoter region of its target genes, recognizing a short DNA motif called the MalT box. In Serratia proteamaculans (strain 568), this protein is HTH-type transcriptional regulator MalT.